A 245-amino-acid chain; its full sequence is Suppressor of aph-1 (245 aa).

The GYF domain occupies 12 to 60; the sequence is DTKWHYLGPDSEKYGPYMSKDMLFWLQAGYFNDGLQLKTENEPNYHTLG. Residues 126-166 are disordered; sequence NQNGPPMGAQMHSQPPSEPIDAGSLSHTPDSENETRLNEQT.

Involved in negative regulation of early and late embryonic Notch signaling. The chain is Suppressor of aph-1 from Caenorhabditis elegans.